The sequence spans 351 residues: Methylthioribose-1-phosphate isomerase (351 aa).

Residues 55–57 (RGA), R95, and Q202 each bind substrate. The Proton donor role is filled by D243. 253–254 (NK) lines the substrate pocket.

Belongs to the eIF-2B alpha/beta/delta subunits family. MtnA subfamily.

It carries out the reaction 5-(methylsulfanyl)-alpha-D-ribose 1-phosphate = 5-(methylsulfanyl)-D-ribulose 1-phosphate. It functions in the pathway amino-acid biosynthesis; L-methionine biosynthesis via salvage pathway; L-methionine from S-methyl-5-thio-alpha-D-ribose 1-phosphate: step 1/6. In terms of biological role, catalyzes the interconversion of methylthioribose-1-phosphate (MTR-1-P) into methylthioribulose-1-phosphate (MTRu-1-P). This Marinobacter nauticus (strain ATCC 700491 / DSM 11845 / VT8) (Marinobacter aquaeolei) protein is Methylthioribose-1-phosphate isomerase.